The following is a 315-amino-acid chain: Putative steroid dehydrogenase 3 (315 aa).

Residue 47-76 (ASWAVITGGTDGIGKSFSFELAKRGFNIYI) coordinates NADP(+). The active site involves Tyr-202.

The protein belongs to the short-chain dehydrogenases/reductases (SDR) family. 17-beta-HSD 3 subfamily.

The chain is Putative steroid dehydrogenase 3 (stdh-3) from Caenorhabditis elegans.